The chain runs to 1282 residues: MVQENNNTQSKWTDSQRQVIDENYHHILVSAGAGAGKTAVLVQRIISKLIDPHDDLTVNGLLVVTFTEKAANEMRDRIARELKKALSQDPENDHLKKQLYLLNKANISTLHSFCLEILRHYFYYLDIDPAFSVASEYDVELLRQSVIDNYLEEEYGLGEQSFYLLVDSYGGDKNDEKLKKMILTLHRFSRSHPRPRKWLQSVKDHFEVSTDDDLTNTVYYLEIQKDIETLFKQCINYFKRALQTSEQPGGPYQYAETLLEEIEQVQNFTQQLVEVENHSFDWNSFAERVAGFKFSKLPSVSKNDDVDEDLKKDCKKLRDHGKKTFQKLVQNYFTRSKDELLRDLQQLSPLMNKLIDMVINMDDKYEEVKKQRGIMDFSDLEHYVYELLDQYPEIVSELHQRYDEVMVDEYQDINQVQNAILEKLTGQQSISPDLFMVGDVKQSIYRFRLAEPELFLNKYDTFDQRSEEGSLIELQENFRSSPMVLESVNYLFSRIMTGSLSGIEYNEKVKLIPASKPRELYLNEDDNEDDKYEGQAENENQVIDGRTEVHLLENKDTNSREEDTEREAQLIATTINSLVEEEYRIYDRDLDDYRKLDYSDFVILSRKTKEQAELVTNVFQEHGVPLYAELDTGYFAAQEVQVMLSLLKIIDNPRQDIPLAGVLRSPLVGLDSNELVEIRRSNPGTDYYEACKRVLTNSIEQQNQCSEKTIQKMQKFFSQLERWRRISRERSLAELIWDIYQITDYLDYVAGFPGGRERQANLWSFYDRALQFDSFSHSGLVKFLNFIEKLVEQDFDLGKARTVSENENVVRLMSIHKSKGLEFPVVFVMGLGNNFNFNDQKGDLLLHKDLGLGPKLVDLTNRIKYPTIAHQAIKGSLGRETLAEEMRILYVAMTRAEEKLFLVGSGKDIESKISVPEEPAAAQNYLDWIYPQLGEDSELFHKIWNDIPGQQDGKSVEYNWKSYFESLLSQTFTWEVDQEEFEDQKRTLEQAISYSYPYNIATEIVGKMSVTDLAKSDTYIDSKIVSQNQSLSSVQDHYKKLAATQIPMFLETTEDAGDNKYESYKEHHTPSKRPEFLKSNSGLTGAEAGTSIHLAFQHLPINSDLNSQEFSEEQISNQLDDLVNKEIITQAQRDVISEDLIMKFFQSELGQAILERPKGLKRELPFTLGVPAWEMLAGSEECQAELEAENIETTELQGLSDETVVIQGVIDYLFWDGTNYYLIDFKTDKLNTSNMDEIEKRLQGKYRMQIQMYLRAITEIFNITPTKAYLYHVPTGNWIQVE.

Residues S10–S481 enclose the UvrD-like helicase ATP-binding domain. An ATP-binding site is contributed by A31–T38. The UvrD-like helicase C-terminal domain maps to K516–G820.

This sequence belongs to the helicase family. AddA subfamily. Heterodimer of AddA and AddB/RexB. It depends on Mg(2+) as a cofactor.

The catalysed reaction is Couples ATP hydrolysis with the unwinding of duplex DNA by translocating in the 3'-5' direction.. The enzyme catalyses ATP + H2O = ADP + phosphate + H(+). Functionally, the heterodimer acts as both an ATP-dependent DNA helicase and an ATP-dependent, dual-direction single-stranded exonuclease. Recognizes the chi site generating a DNA molecule suitable for the initiation of homologous recombination. The AddA nuclease domain is required for chi fragment generation; this subunit has the helicase and 3' -&gt; 5' nuclease activities. In Natranaerobius thermophilus (strain ATCC BAA-1301 / DSM 18059 / JW/NM-WN-LF), this protein is ATP-dependent helicase/nuclease subunit A.